The sequence spans 613 residues: Laccase 1 (613 aa).

An N-terminal signal peptide occupies residues 1–20 (MSRFARLLLIVALFFTGAWA). Plastocyanin-like domains follow at residues 29–142 (ITWK…IRPK) and 171–359 (YLVV…MRIP). Asn74 is a glycosylation site (N-linked (GlcNAc...) asparagine). Cu cation is bound by residues His78, His80, His122, and His124. N-linked (GlcNAc...) asparagine glycans are attached at residues Asn256, Asn279, Asn444, Asn468, and Asn484. The Plastocyanin-like 3 domain maps to 468–598 (NATRDTENDG…GGMGIAILDG (131 aa)). His506, His509, and His511 together coordinate Cu cation. A glycan (N-linked (GlcNAc...) asparagine) is linked at Asn526. 4 residues coordinate Cu cation: His580, Cys581, His582, and His586.

The protein belongs to the multicopper oxidase family. Requires Cu cation as cofactor.

The protein resides in the cell surface. It functions in the pathway pigment biosynthesis. In terms of biological role, laccase; part of the Pks1 gene cluster that mediates the biosynthesis of an anthraquinone derivative pigment that contributes to conidial pigmentation that provides protection from UV radiation, heat and cold stress. The polyketide synthase Pks1 produces 1-acetyl-2,4,6,8-tetrahydroxy-9,10-anthraquinone though condensation of acetyl-CoA with malonyl-CoA. The dehydratase EthD and the laccase Mlac1 further convert the anthraquinone derivative into the final conidial pigment. The sequence is that of Laccase 1 from Metarhizium guizhouense (strain ARSEF 977).